The primary structure comprises 139 residues: Small ribosomal subunit protein uS12 (139 aa).

The interval 1 to 21 is disordered; the sequence is MPTINQLVRKGRKAVQEKSTA. Asp102 bears the 3-methylthioaspartic acid mark.

This sequence belongs to the universal ribosomal protein uS12 family. As to quaternary structure, part of the 30S ribosomal subunit. Contacts proteins S8 and S17. May interact with IF1 in the 30S initiation complex.

With S4 and S5 plays an important role in translational accuracy. Functionally, interacts with and stabilizes bases of the 16S rRNA that are involved in tRNA selection in the A site and with the mRNA backbone. Located at the interface of the 30S and 50S subunits, it traverses the body of the 30S subunit contacting proteins on the other side and probably holding the rRNA structure together. The combined cluster of proteins S8, S12 and S17 appears to hold together the shoulder and platform of the 30S subunit. The protein is Small ribosomal subunit protein uS12 of Alkaliphilus metalliredigens (strain QYMF).